We begin with the raw amino-acid sequence, 518 residues long: Membrane-bound lytic murein transglycosylase F (518 aa).

A signal peptide spans 1–21 (MKKLKINYLFIGILALLLAVA). The non-LT domain stretch occupies residues 22 to 269 (LWPSIPWFGK…RIEEKYLGHG (248 aa)). Residues 270–518 (DDFDYVDTRT…SRKGSEEKQN (249 aa)) are LT domain. The active site involves Glu314.

The protein in the N-terminal section; belongs to the bacterial solute-binding protein 3 family. It in the C-terminal section; belongs to the transglycosylase Slt family.

Its subcellular location is the cell outer membrane. The catalysed reaction is Exolytic cleavage of the (1-&gt;4)-beta-glycosidic linkage between N-acetylmuramic acid (MurNAc) and N-acetylglucosamine (GlcNAc) residues in peptidoglycan, from either the reducing or the non-reducing ends of the peptidoglycan chains, with concomitant formation of a 1,6-anhydrobond in the MurNAc residue.. In terms of biological role, murein-degrading enzyme that degrades murein glycan strands and insoluble, high-molecular weight murein sacculi, with the concomitant formation of a 1,6-anhydromuramoyl product. Lytic transglycosylases (LTs) play an integral role in the metabolism of the peptidoglycan (PG) sacculus. Their lytic action creates space within the PG sacculus to allow for its expansion as well as for the insertion of various structures such as secretion systems and flagella. In Escherichia coli O157:H7, this protein is Membrane-bound lytic murein transglycosylase F.